The sequence spans 551 residues: Rqc2 homolog RqcH (551 aa).

Residues 363–551 (YQKLKEAVKY…SKKIASMKKS (189 aa)) form a required for fibronectin binding region.

Belongs to the NEMF family. In terms of assembly, associates with stalled 50S ribosomal subunits, binds to RqcP. Interacts with human fibronectin.

Its subcellular location is the cell surface. The protein localises to the cytoplasm. In terms of biological role, key component of the ribosome quality control system (RQC), a ribosome-associated complex that mediates the extraction of incompletely synthesized nascent chains from stalled ribosomes and their subsequent degradation. RqcH recruits Ala-charged tRNA, and with RqcP directs the elongation of stalled nascent chains on 50S ribosomal subunits, leading to non-templated C-terminal alanine extensions (Ala tail). The Ala tail promotes nascent chain degradation. May add between 1 and at least 8 Ala residues. Binds to stalled 50S ribosomal subunits. Its function is as follows. Recombinant protein binds to immobilized human fibronectin; binding is saturable and competed by heparin. Recombinant protein inhibits binding of whole cells to fibronectin. The chain is Rqc2 homolog RqcH from Streptococcus pneumoniae (strain ATCC BAA-255 / R6).